The primary structure comprises 334 residues: 4-hydroxyproline 2-epimerase (334 aa).

The active-site Proton acceptor is the C91. Residues 92-93 (GH), H224, and D250 each bind substrate. Catalysis depends on C254, which acts as the Proton donor. 255 to 256 (GT) contacts substrate.

The protein belongs to the proline racemase family.

The catalysed reaction is trans-4-hydroxy-L-proline = cis-4-hydroxy-D-proline. Functionally, catalyzes the epimerization of trans-4-hydroxy-L-proline (t4LHyp) to cis-4-hydroxy-D-proline (c4DHyp). Is likely involved in a degradation pathway that converts t4LHyp to alpha-ketoglutarate. Displays no proline racemase activity. The polypeptide is 4-hydroxyproline 2-epimerase (Spirosoma linguale (strain ATCC 33905 / DSM 74 / LMG 10896 / Claus 1)).